The sequence spans 524 residues: Acetyl-CoA hydrolase (524 aa).

Residue 279–283 coordinates CoA; sequence GIGNI. Residue Glu-304 is the 5-glutamyl coenzyme A thioester intermediate of the active site. Gly-398 contributes to the CoA binding site.

The protein belongs to the acetyl-CoA hydrolase/transferase family.

The protein resides in the cytoplasm. The catalysed reaction is acetyl-CoA + H2O = acetate + CoA + H(+). Functionally, presumably involved in regulating the intracellular acetyl-CoA pool for fatty acid and cholesterol synthesis and fatty acid oxidation. The chain is Acetyl-CoA hydrolase (ACH1) from Yarrowia lipolytica (strain CLIB 122 / E 150) (Yeast).